We begin with the raw amino-acid sequence, 116 residues long: Dynein light chain Tctex-type 3 (116 aa).

3'-nitrotyrosine is present on Y4.

Belongs to the dynein light chain Tctex-type family. As to quaternary structure, homodimer. The cytoplasmic dynein 1 complex consists of two catalytic heavy chains (HCs) and a number of non-catalytic subunits presented by intermediate chains (ICs), light intermediate chains (LICs) and light chains (LCs); the composition seems to vary in respect to the IC, LIC and LC composition. The heavy chain homodimer serves as a scaffold for the probable homodimeric assembly of the respective non-catalytic subunits. The ICs and LICs bind directly to the HC dimer and the LCs assemble on the IC dimer. DYNLT1 and DYNLT3 compete for association with dynein IC (DYNC1I1 or DYNC1I2). Self-associates. Interacts with DYNC1I1 and DYNC1I2. Interacts with BUB3. Interacts with SATB1 in nucleus to form complex with matrix attachment regions (MARs) of DNA.

The protein localises to the nucleus. The protein resides in the cytoplasm. Its subcellular location is the cytoskeleton. It is found in the chromosome. It localises to the centromere. The protein localises to the kinetochore. Functionally, acts as one of several non-catalytic accessory components of the cytoplasmic dynein 1 complex that are thought to be involved in linking dynein to cargos and to adapter proteins that regulate dynein function. Cytoplasmic dynein 1 acts as a motor for the intracellular retrograde motility of vesicles and organelles along microtubules. Probably binds BUB3 as part of transport cargo. Required for the efficient progression through mitosis. The sequence is that of Dynein light chain Tctex-type 3 (DYNLT3) from Canis lupus familiaris (Dog).